A 445-amino-acid polypeptide reads, in one-letter code: Trigger factor (445 aa).

Positions 162-247 (GDQVTIDAIG…IKAVHTAEPT (86 aa)) constitute a PPIase FKBP-type domain.

It belongs to the FKBP-type PPIase family. Tig subfamily.

It localises to the cytoplasm. The catalysed reaction is [protein]-peptidylproline (omega=180) = [protein]-peptidylproline (omega=0). Functionally, involved in protein export. Acts as a chaperone by maintaining the newly synthesized protein in an open conformation. Functions as a peptidyl-prolyl cis-trans isomerase. This is Trigger factor from Rickettsia africae (strain ESF-5).